Here is a 521-residue protein sequence, read N- to C-terminus: Cytochrome P450 1A1 (521 aa).

A substrate-binding site is contributed by Phe229. Cys463 contacts heme.

This sequence belongs to the cytochrome P450 family. Heme is required as a cofactor.

The protein localises to the endoplasmic reticulum membrane. The protein resides in the microsome membrane. It carries out the reaction an organic molecule + reduced [NADPH--hemoprotein reductase] + O2 = an alcohol + oxidized [NADPH--hemoprotein reductase] + H2O + H(+). In terms of biological role, cytochromes P450 are a group of heme-thiolate monooxygenases. They oxidize a variety of structurally unrelated compounds, including steroids, fatty acids, and xenobiotics. In Chelon auratus (Golden grey mullet), this protein is Cytochrome P450 1A1 (cyp1a1).